Here is a 209-residue protein sequence, read N- to C-terminus: E3 ubiquitin-protein ligase RNF138 (209 aa).

An RING-type zinc finger spans residues 18-58 (CPVCQEVLKTPVRTAACQHVFCRKCFLTAMRESGIHCPLCR). Residues Cys86, Cys89, His101, and Cys105 each contribute to the Zn(2+) site. A C2HC RNF-type zinc finger spans residues 86–105 (CRCCSKKIKFYRMRHHYKSC). Positions 125–154 (QDSVRSSNRSETSASDNTETYQEDTSSSGH) are disordered. At Thr142 the chain carries Phosphothreonine. A C2H2-type zinc finger spans residues 157–180 (FKCPLCQESNFTRQRLLDHCNSNH). In terms of domain architecture, UIM spans 189 to 207 (LQLDEETQYQTAVEESFQV).

Interacts with NLK. Interacts with XRCC5/Ku80. Interacts with RBBP8/CtIP. Auto-ubiquitinated.

Its subcellular location is the chromosome. It catalyses the reaction S-ubiquitinyl-[E2 ubiquitin-conjugating enzyme]-L-cysteine + [acceptor protein]-L-lysine = [E2 ubiquitin-conjugating enzyme]-L-cysteine + N(6)-ubiquitinyl-[acceptor protein]-L-lysine.. It functions in the pathway protein modification; protein ubiquitination. In terms of biological role, E3 ubiquitin-protein ligase involved in DNA damage response by promoting DNA resection and homologous recombination. Recruited to sites of double-strand breaks following DNA damage and specifically promotes double-strand break repair via homologous recombination. Two different, non-exclusive, mechanisms have been proposed. According to a report, regulates the choice of double-strand break repair by favoring homologous recombination over non-homologous end joining (NHEJ): acts by mediating ubiquitination of XRCC5/Ku80, leading to remove the Ku complex from DNA breaks, thereby promoting homologous recombination. According to another report, cooperates with UBE2Ds E2 ubiquitin ligases (UBE2D1, UBE2D2, UBE2D3 or UBE2D4) to promote homologous recombination by mediating ubiquitination of RBBP8/CtIP. Together with NLK, involved in the ubiquitination and degradation of TCF/LEF. Also exhibits auto-ubiquitination activity in combination with UBE2K. May act as a negative regulator in the Wnt/beta-catenin-mediated signaling pathway. The sequence is that of E3 ubiquitin-protein ligase RNF138 from Rattus norvegicus (Rat).